Here is a 90-residue protein sequence, read N- to C-terminus: Putative membrane protein insertion efficiency factor (90 aa).

Belongs to the UPF0161 family.

The protein localises to the cell inner membrane. Its function is as follows. Could be involved in insertion of integral membrane proteins into the membrane. This chain is Putative membrane protein insertion efficiency factor, found in Thermosynechococcus vestitus (strain NIES-2133 / IAM M-273 / BP-1).